The primary structure comprises 362 residues: Homeobox-leucine zipper protein HOX11 (362 aa).

Over residues 27–45 (REEAAEAGRRDHEVRRELE) the composition is skewed to basic and acidic residues. Residues 27–179 (REEAAEAGRR…DDGGSARKKL (153 aa)) form a disordered region. Residues 64-75 (LTLLPMVPGLGL) show a composition bias toward low complexity. A compositionally biased stretch (polar residues) spans 126 to 135 (LSSSPNNSAG). A compositionally biased stretch (gly residues) spans 145-160 (HGLGGNDAAPGGGGGD). The homeobox DNA-binding region spans 174-233 (SARKKLRLSKEQSAFLEESFKEHSTLNPKQKLALAKQLNLRPRQVEVWFQNRRARTKLKQ). The leucine-zipper stretch occupies residues 232-276 (KQTEVDCEYLKRCCETLTEENRRLQKELAELRALKTVHPFYMHLP). Residues 301–330 (AATSSTAAPPAAPSSGGIAATSSSAAAAAA) are disordered.

Belongs to the HD-ZIP homeobox family. Class II subfamily. In terms of tissue distribution, expressed in stems, leaf sheaths and blades and panicles.

It localises to the nucleus. Functionally, probable transcription factor. This chain is Homeobox-leucine zipper protein HOX11 (HOX11), found in Oryza sativa subsp. japonica (Rice).